The primary structure comprises 123 residues: Galanin peptides (123 aa).

Residues 1-19 form the signal peptide; it reads MPRGSVLLLASLLLAAALS. Positions 20-30 are excised as a propeptide; sequence ATLGLGSPVKE. The segment covering 53-66 has biased composition (basic and acidic residues); that stretch reads SFQDKHGLAGKREL. The tract at residues 53–79 is disordered; it reads SFQDKHGLAGKRELEPEDEARPGSFDR. Ala61 is subject to Alanine amide. Ser116 is modified (phosphoserine).

Belongs to the galanin family.

It localises to the secreted. Its function is as follows. Endocrine hormone of the central and peripheral nervous systems that binds and activates the G protein-coupled receptors GALR1, GALR2, and GALR3. This small neuropeptide may regulate diverse physiologic functions including contraction of smooth muscle of the gastrointestinal and genitourinary tract, growth hormone and insulin release and adrenal secretion. The protein is Galanin peptides (GAL) of Bos taurus (Bovine).